The sequence spans 1127 residues: WD repeat and HMG-box DNA-binding protein 1 (1127 aa).

7 WD repeats span residues 11 to 50 (GHPE…DPKS), 52 to 91 (SIGE…GILT), 92 to 131 (RFTT…QQKT), 134 to 173 (GHSA…CEAV), 184 to 223 (FNAK…NICT), 228 to 267 (FITQ…CLER), and 271 to 310 (EKGY…DVKQ). Disordered stretches follow at residues 811–1013 (AAEQ…AENK) and 1064–1127 (KAKG…FKKE). Positions 819–829 (QNEEEDEEEED) are enriched in acidic residues. Over residues 846–857 (GDSRAKPVKQDQ) the composition is skewed to basic and acidic residues. Over residues 858–877 (YEENNEEEMEEEEKEQEEAL) the composition is skewed to acidic residues. Polar residues-rich tracts occupy residues 881–891 (TPTANPFNKSV) and 918–937 (SASQ…TSIL). A compositionally biased stretch (low complexity) spans 948–960 (SASGSPSTSKSDS). The HMG box DNA-binding region spans 1013–1076 (KKPKTGFQLW…GDYPGEDGAD (64 aa)). Residues 1087–1100 (NMASNGCPQENTDS) are compositionally biased toward polar residues.

In terms of assembly, homodimer. As to expression, found in oocytes and in various other cells.

The protein resides in the nucleus. It localises to the nucleoplasm. It is found in the cytoplasm. Core replisome component that acts as a replication initiation factor. Binds directly to the CMG complex and functions as a hub to recruit additional proteins to the replication fork. This Xenopus laevis (African clawed frog) protein is WD repeat and HMG-box DNA-binding protein 1 (wdhd1).